The chain runs to 37 residues: Esculentin-2JDb (37 aa).

Cysteines 31 and 37 form a disulfide.

In terms of tissue distribution, expressed by the skin glands.

The protein localises to the secreted. Functionally, has antibacterial activity against E.coli and S.aureus strains. The sequence is that of Esculentin-2JDb from Odorrana jingdongensis (Jingdong frog).